A 70-amino-acid polypeptide reads, in one-letter code: UPF0270 protein VV1_1320 (70 aa).

It belongs to the UPF0270 family.

In Vibrio vulnificus (strain CMCP6), this protein is UPF0270 protein VV1_1320.